The chain runs to 453 residues: tRNA modification GTPase MnmE (453 aa).

Residues Arg22, Glu79, and Lys119 each coordinate (6S)-5-formyl-5,6,7,8-tetrahydrofolate. Residues 215–376 form the TrmE-type G domain; sequence GMKVVIAGRP…LKQHLKSLMG (162 aa). A K(+)-binding site is contributed by Asn225. GTP contacts are provided by residues 225–230, 244–250, 269–272, and 334–337; these read NAGKSS, TEIAGTT, DTAG, and NKAD. A Mg(2+)-binding site is contributed by Ser229. Thr244, Ile246, and Thr249 together coordinate K(+). Residue Thr250 coordinates Mg(2+). Lys453 provides a ligand contact to (6S)-5-formyl-5,6,7,8-tetrahydrofolate.

Belongs to the TRAFAC class TrmE-Era-EngA-EngB-Septin-like GTPase superfamily. TrmE GTPase family. In terms of assembly, homodimer. Heterotetramer of two MnmE and two MnmG subunits. Requires K(+) as cofactor.

It localises to the cytoplasm. Exhibits a very high intrinsic GTPase hydrolysis rate. Involved in the addition of a carboxymethylaminomethyl (cmnm) group at the wobble position (U34) of certain tRNAs, forming tRNA-cmnm(5)s(2)U34. The polypeptide is tRNA modification GTPase MnmE (Shewanella baltica (strain OS155 / ATCC BAA-1091)).